A 1610-amino-acid polypeptide reads, in one-letter code: Adenylate cyclase type 10 (1610 aa).

2 Guanylate cyclase domains span residues 42–179 (VLMF…RLAQ) and 293–418 (TIVF…ARMM). Mg(2+) is bound by residues D47 and I48. Residue 47 to 52 (DISGFT) participates in ATP binding. A hydrogencarbonate-binding site is contributed by K95. D99 serves as a coordination point for Mg(2+). D99 and K144 together coordinate ATP. Hydrogencarbonate-binding residues include V167, R176, and M337. ATP is bound by residues V406 and 412–416 (NIAAR).

It belongs to the adenylyl cyclase class-4/guanylyl cyclase family. Mg(2+) is required as a cofactor. The cofactor is Mn(2+).

Its subcellular location is the cell membrane. It localises to the cytoplasm. The protein resides in the cytoskeleton. It is found in the perinuclear region. The protein localises to the nucleus. Its subcellular location is the cell projection. It localises to the cilium. It catalyses the reaction ATP = 3',5'-cyclic AMP + diphosphate. With respect to regulation, activated by manganese or magnesium ions. In the presence of magnesium ions, the enzyme is activated by bicarbonate. Calcium mildly increases the enzyme activity, also in the presence of magnesium ions. Catalyzes the formation of the signaling molecule cAMP. May function as sensor that mediates responses to changes in cellular bicarbonate and CO(2) levels. Has a critical role in mammalian spermatogenesis by producing the cAMP which regulates cAMP-responsive nuclear factors indispensable for sperm maturation in the epididymis. Induces capacitation, the maturational process that sperm undergo prior to fertilization. Involved in ciliary beat regulation. The sequence is that of Adenylate cyclase type 10 (ADCY10) from Oryctolagus cuniculus (Rabbit).